Reading from the N-terminus, the 98-residue chain is Aspartyl/glutamyl-tRNA(Asn/Gln) amidotransferase subunit C (98 aa).

The tract at residues 76–98 is disordered; the sequence is QVLSGAPDAEDGRFKVPAILEED.

The protein belongs to the GatC family. In terms of assembly, heterotrimer of A, B and C subunits.

It carries out the reaction L-glutamyl-tRNA(Gln) + L-glutamine + ATP + H2O = L-glutaminyl-tRNA(Gln) + L-glutamate + ADP + phosphate + H(+). The catalysed reaction is L-aspartyl-tRNA(Asn) + L-glutamine + ATP + H2O = L-asparaginyl-tRNA(Asn) + L-glutamate + ADP + phosphate + 2 H(+). Functionally, allows the formation of correctly charged Asn-tRNA(Asn) or Gln-tRNA(Gln) through the transamidation of misacylated Asp-tRNA(Asn) or Glu-tRNA(Gln) in organisms which lack either or both of asparaginyl-tRNA or glutaminyl-tRNA synthetases. The reaction takes place in the presence of glutamine and ATP through an activated phospho-Asp-tRNA(Asn) or phospho-Glu-tRNA(Gln). This is Aspartyl/glutamyl-tRNA(Asn/Gln) amidotransferase subunit C from Renibacterium salmoninarum (strain ATCC 33209 / DSM 20767 / JCM 11484 / NBRC 15589 / NCIMB 2235).